The sequence spans 484 residues: Glutamyl-tRNA(Gln) amidotransferase subunit B, mitochondrial (484 aa).

It belongs to the GatB/GatE family. GatB subfamily. In terms of assembly, subunit of the heterotrimeric GatFAB amidotransferase (AdT) complex, composed of A, B and F subunits.

The protein localises to the mitochondrion. The catalysed reaction is L-glutamyl-tRNA(Gln) + L-glutamine + ATP + H2O = L-glutaminyl-tRNA(Gln) + L-glutamate + ADP + phosphate + H(+). Allows the formation of correctly charged Gln-tRNA(Gln) through the transamidation of misacylated Glu-tRNA(Gln) in the mitochondria. The reaction takes place in the presence of glutamine and ATP through an activated gamma-phospho-Glu-tRNA(Gln). This Candida tropicalis (strain ATCC MYA-3404 / T1) (Yeast) protein is Glutamyl-tRNA(Gln) amidotransferase subunit B, mitochondrial.